Reading from the N-terminus, the 31-residue chain is MVTIFSYIALLLSALVITLTCYIGLLKIKLI.

The helical transmembrane segment at 4-24 (IFSYIALLLSALVITLTCYIG) threads the bilayer.

The protein belongs to the PetL family. As to quaternary structure, the 4 large subunits of the cytochrome b6-f complex are cytochrome b6, subunit IV (17 kDa polypeptide, PetD), cytochrome f and the Rieske protein, while the 4 small subunits are PetG, PetL, PetM and PetN. The complex functions as a dimer.

It localises to the plastid. The protein resides in the chloroplast thylakoid membrane. Its function is as follows. Component of the cytochrome b6-f complex, which mediates electron transfer between photosystem II (PSII) and photosystem I (PSI), cyclic electron flow around PSI, and state transitions. PetL is important for photoautotrophic growth as well as for electron transfer efficiency and stability of the cytochrome b6-f complex. In Chlorella vulgaris (Green alga), this protein is Cytochrome b6-f complex subunit 6.